The primary structure comprises 189 residues: Protein jagunal homolog (189 aa).

Residues 1-34 are Cytoplasmic-facing; sequence MSSRGVRAAGTDGTDFQNRQRVAQHYQESAQYKS. A helical membrane pass occupies residues 35–55; the sequence is ILKWFFVPHFLILVFMWLKVG. Residues 56-78 are Lumenal-facing; sequence SELLRTNFGWKNAFFDRLDMPSA. Residues 79 to 99 traverse the membrane as a helical segment; it reads YPWEYVWCFSFIPIVLAIYSF. Over 100 to 105 the chain is Cytoplasmic; that stretch reads QRNKLK. A helical transmembrane segment spans residues 106-126; it reads ILHYAYYAEFVVGIFPCMIGL. The Lumenal portion of the chain corresponds to 127–150; the sequence is GGQLPELMEYAQDMEGSNTPTFKG. A helical membrane pass occupies residues 151-171; that stretch reads IFPMVIIWYIFFAVALQIHGF. Residues 172 to 189 lie on the Cytoplasmic side of the membrane; that stretch reads SMYFMHHLAAAWAPVKRD.

Belongs to the jagunal family.

It localises to the endoplasmic reticulum membrane. The protein is Protein jagunal homolog of Caenorhabditis elegans.